Reading from the N-terminus, the 147-residue chain is MGVSLATRKYWPARTREGGCLRWEPVPAGQDLSCSLCDSLRVDMFLVVEPRRGLTRAGRGCECVRAGKRSLRGLARWPGAGAGGSAAFRACKTRHLLQREKCAVGRERRFCLWSGRHPKAPPGGRSRVRAHPGSDRVTAWLTGRRNS.

It is found in the host nucleus. The sequence is that of Protein MC014 (MC014) from Homo sapiens (Human).